The following is a 210-amino-acid chain: DNA replication complex GINS protein PSF3 (210 aa).

This sequence belongs to the GINS3/PSF3 family. Component of the GINS complex which is a heterotetramer of gins1/psf1, gins2/psf2, gins3/psf3 and gins4/sld5. Component of the CMG helicase complex, composed of the mcm2-7 complex, the GINS complex and cdc45.

It is found in the nucleus. The protein localises to the chromosome. Required for correct functioning of the GINS complex, a complex that plays an essential role in the initiation of DNA replication, and progression of DNA replication forks. GINS complex is a core component of CDC45-MCM-GINS (CMG) helicase, the molecular machine that unwinds template DNA during replication, and around which the replisome is built. The sequence is that of DNA replication complex GINS protein PSF3 from Xenopus laevis (African clawed frog).